The primary structure comprises 357 residues: Vomeronasal type-1 receptor 5 (357 aa).

At 1–3 (MLK) the chain is on the extracellular side. A helical transmembrane segment spans residues 4-24 (LVIIENMAEIMLFSLDLLLFS). Residues 25–52 (TDILCFNFPSKMIKLPGFITIQIFFYPQ) are Cytoplasmic-facing. A helical membrane pass occupies residues 53-73 (ASFGISANTILLLFHIFTFVF). At 74–81 (SHRSKSID) the chain is on the extracellular side. Residues 82 to 102 (MIISHLSLIHILLLFTQAILV) traverse the membrane as a helical segment. The Cytoplasmic segment spans residues 103 to 130 (SLDFFGSQNTQDDLRYKVIVFLNKVMRG). Residues 131–151 (LSICTPCLLSVLQAIISPSIF) traverse the membrane as a helical segment. At 152-163 (SLAKLKHPSASH) the chain is on the extracellular side. The chain crosses the membrane as a helical span at residues 164–184 (ILGFFLFSWVLNMFIGVIFCC). Residues 185-269 (TLRLPPVKRG…RVSPVKRASQ (85 aa)) are Cytoplasmic-facing. Residues 270-290 (AILLLVSFVFTYWVDFTFSFS) traverse the membrane as a helical segment. Residues 291–300 (GGVTWINDSL) are Extracellular-facing. N297 carries N-linked (GlcNAc...) asparagine glycosylation. A helical transmembrane segment spans residues 301–321 (LVWLQVIVANSYAAISPLMLI). The Cytoplasmic portion of the chain corresponds to 322–357 (YADNQIFKTLQMLWFKYLSPPKLMLKFNRQCGSTKK).

The protein belongs to the G-protein coupled receptor 1 family.

It is found in the cell membrane. Putative pheromone receptor. The chain is Vomeronasal type-1 receptor 5 (VN1R5) from Homo sapiens (Human).